The chain runs to 51 residues: MANYIEVFSVLAIIFATVLAALAQDCSPEGAQCVRDSECCYNECIDSLCQP.

Residues 1–23 (MANYIEVFSVLAIIFATVLAALA) form the signal peptide. Cystine bridges form between C26–C40, C33–C44, and C39–C49.

Belongs to the asilidin-1 family. In terms of tissue distribution, expressed by the venom gland. Is the most highly expressed peptide and is around 3000 times higher expressed in the thoracic glands compared to its body tissues.

The protein localises to the secreted. Induces neurotoxic effect on honeybees, including slow movements, disorientation and paralysis. Since it provokes similar symptoms than omega-atracotoxin, it is probable that it acts in the same way by inhibiting voltage-gated calcium channels. The protein is U-Asilidin(1)-Mar1a of Machimus arthriticus (Breck robberfly).